A 183-amino-acid polypeptide reads, in one-letter code: ATP-dependent protease subunit HslV (183 aa).

Residue threonine 7 is part of the active site. Na(+) contacts are provided by glycine 162, cysteine 165, and threonine 168.

The protein belongs to the peptidase T1B family. HslV subfamily. A double ring-shaped homohexamer of HslV is capped on each side by a ring-shaped HslU homohexamer. The assembly of the HslU/HslV complex is dependent on binding of ATP.

It localises to the cytoplasm. It carries out the reaction ATP-dependent cleavage of peptide bonds with broad specificity.. Allosterically activated by HslU binding. Protease subunit of a proteasome-like degradation complex believed to be a general protein degrading machinery. This chain is ATP-dependent protease subunit HslV, found in Chromobacterium violaceum (strain ATCC 12472 / DSM 30191 / JCM 1249 / CCUG 213 / NBRC 12614 / NCIMB 9131 / NCTC 9757 / MK).